The primary structure comprises 540 residues: Glucose-6-phosphate isomerase (540 aa).

The active-site Proton donor is the Glu346. Active-site residues include His377 and Lys505.

It belongs to the GPI family.

It localises to the cytoplasm. It carries out the reaction alpha-D-glucose 6-phosphate = beta-D-fructose 6-phosphate. It functions in the pathway carbohydrate biosynthesis; gluconeogenesis. It participates in carbohydrate degradation; glycolysis; D-glyceraldehyde 3-phosphate and glycerone phosphate from D-glucose: step 2/4. Functionally, catalyzes the reversible isomerization of glucose-6-phosphate to fructose-6-phosphate. In Francisella tularensis subsp. tularensis (strain SCHU S4 / Schu 4), this protein is Glucose-6-phosphate isomerase.